The following is a 226-amino-acid chain: ATP-dependent dethiobiotin synthetase BioD (226 aa).

12–17 (GVGKTV) contributes to the ATP binding site. Thr-16 provides a ligand contact to Mg(2+). The active site involves Lys-37. Thr-41 provides a ligand contact to substrate. ATP contacts are provided by residues Asp-49, 108-111 (EGAG), 169-170 (GS), and 197-199 (PAG). Mg(2+) contacts are provided by Asp-49 and Glu-108.

The protein belongs to the dethiobiotin synthetase family. Homodimer. It depends on Mg(2+) as a cofactor.

It localises to the cytoplasm. It catalyses the reaction (7R,8S)-7,8-diammoniononanoate + CO2 + ATP = (4R,5S)-dethiobiotin + ADP + phosphate + 3 H(+). It participates in cofactor biosynthesis; biotin biosynthesis; biotin from 7,8-diaminononanoate: step 1/2. Its function is as follows. Catalyzes a mechanistically unusual reaction, the ATP-dependent insertion of CO2 between the N7 and N8 nitrogen atoms of 7,8-diaminopelargonic acid (DAPA, also called 7,8-diammoniononanoate) to form a ureido ring. This is ATP-dependent dethiobiotin synthetase BioD from Mycobacterium bovis (strain BCG / Pasteur 1173P2).